Reading from the N-terminus, the 468-residue chain is Trigger factor (468 aa).

The region spanning 162–243 (GDVLTLDLQA…VSQVAARELP (82 aa)) is the PPIase FKBP-type domain. The segment at 428–468 (NGEIVDLDDEEDEETEAAEADATEAADAEKADDKAEEKTEG) is disordered. Over residues 432–453 (VDLDDEEDEETEAAEADATEAA) the composition is skewed to acidic residues. The segment covering 454 to 468 (DAEKADDKAEEKTEG) has biased composition (basic and acidic residues).

It belongs to the FKBP-type PPIase family. Tig subfamily.

The protein resides in the cytoplasm. The enzyme catalyses [protein]-peptidylproline (omega=180) = [protein]-peptidylproline (omega=0). Involved in protein export. Acts as a chaperone by maintaining the newly synthesized protein in an open conformation. Functions as a peptidyl-prolyl cis-trans isomerase. In Streptomyces coelicolor (strain ATCC BAA-471 / A3(2) / M145), this protein is Trigger factor.